A 174-amino-acid chain; its full sequence is Peptide methionine sulfoxide reductase MsrA (174 aa).

C11 is an active-site residue.

The protein belongs to the MsrA Met sulfoxide reductase family.

It carries out the reaction L-methionyl-[protein] + [thioredoxin]-disulfide + H2O = L-methionyl-(S)-S-oxide-[protein] + [thioredoxin]-dithiol. The catalysed reaction is [thioredoxin]-disulfide + L-methionine + H2O = L-methionine (S)-S-oxide + [thioredoxin]-dithiol. Has an important function as a repair enzyme for proteins that have been inactivated by oxidation. Catalyzes the reversible oxidation-reduction of methionine sulfoxide in proteins to methionine. In Nitratiruptor sp. (strain SB155-2), this protein is Peptide methionine sulfoxide reductase MsrA.